Reading from the N-terminus, the 770-residue chain is Proprotein convertase subtilisin/kexin type 7 (770 aa).

An N-terminal signal peptide occupies residues 1–36 (MPKGRQKVPHLDAHLGLPICLWLELAIFFLVPQVMG). Residues 37 to 140 (LSEAGGLDIL…EQTLLKRAKR (104 aa)) constitute a propeptide that is removed on maturation. Residues 141–666 (SIHFNDPKYP…YTITPNTLKT (526 aa)) lie on the Extracellular side of the membrane. The Peptidase S8 domain maps to 152–472 (QWHLNNRRSP…FGLLNAWRLV (321 aa)). Asn166 and Asn174 each carry an N-linked (GlcNAc...) asparagine glycan. Catalysis depends on Asp186, which acts as the Charge relay system. The segment at 195–228 (DIAPNYSPEGSYDLNSNDPDPMPHPDEENGNHHG) is disordered. The segment covering 215–225 (PMPHPDEENGN) has biased composition (basic and acidic residues). His227 serves as the catalytic Charge relay system. An N-linked (GlcNAc...) asparagine glycan is attached at Asn240. Residue Ser405 is the Charge relay system of the active site. The region spanning 480–617 (SVPYLASYVS…QLTLYGSMWS (138 aa)) is the P/Homo B domain. Residue Asn510 is glycosylated (N-linked (GlcNAc...) asparagine). The chain crosses the membrane as a helical span at residues 667–687 (LVLVGCFSVFWTIYYMLEVCL). At 688–770 (SQRNKASTHG…LLQGKSGQIC (83 aa)) the chain is on the cytoplasmic side.

It belongs to the peptidase S8 family. Ca(2+) is required as a cofactor. Widely expressed. Expressed in brain, lung, muscle, heart, liver, kidney, spleen and thymus.

Its subcellular location is the golgi apparatus. The protein resides in the trans-Golgi network membrane. With respect to regulation, inhibited by zinc and copper. Functionally, serine endoprotease that processes various proproteins by cleavage at paired basic amino acids, recognizing the RXXX[KR]R consensus motif. Likely functions in the constitutive secretory pathway. The protein is Proprotein convertase subtilisin/kexin type 7 (Pcsk7) of Mus musculus (Mouse).